Reading from the N-terminus, the 502-residue chain is MEKFQGYLEFDGARQQSFLYPLFFREYIYVLAYDHGLNRLNKNRSIFLENADYDKKYSSLIVKRIILRMYEQNRLIIPTTDLHKNLGHTNLFYYQMISVLFAVIVEIPFSLRLGSSFEGKQLKKSYNLQSIHSIFPFLEDKLSHFNYVLDVLIPYPIHLEVLVQTLRYRVKDASSLHFFRFCLYEYCNWKNFDIQKKCILNPRFLLFLYNSHICEYESIFFFLRKRSSHLRSTAYEVFFERILFYGKIQNFLKVFVNNFPAMLGLFKDPFLHYVRYHGKSILATKDTPLLMNKWKFYFVNLWQCYFSVWFQSQKVNINQLSKDNLEFLGYLSSLRLNPLVVRSQMLENSFLIDNIRIKLDSKIPISSIIGSLAKDKFCNVLGHPISKATWTDSSDSDILNRFVRICRNISHYYSGSSKKKNLYRINYILRLCCVKTLARKHKSTVRAFLKRLGSGLLEEFLTGEDQVLSLIFPRSYYASKRLYRVRIWYLDILYLNDLVNNE.

Belongs to the intron maturase 2 family. MatK subfamily.

It is found in the plastid. The protein localises to the chloroplast. In terms of biological role, usually encoded in the trnK tRNA gene intron. Probably assists in splicing its own and other chloroplast group II introns. The polypeptide is Maturase K (Arabis blepharophylla (Coast rock-cress)).